The following is a 721-amino-acid chain: Polyribonucleotide nucleotidyltransferase (721 aa).

2 residues coordinate Mg(2+): Asp-511 and Asp-517. In terms of domain architecture, KH spans 577–637 (PSTDFFHINP…SGVQAAREHI (61 aa)). Positions 654–721 (GDIHKGIVKK…KGNKISLGIA (68 aa)) constitute an S1 motif domain.

It belongs to the polyribonucleotide nucleotidyltransferase family. The cofactor is Mg(2+).

It localises to the cytoplasm. It catalyses the reaction RNA(n+1) + phosphate = RNA(n) + a ribonucleoside 5'-diphosphate. In terms of biological role, involved in mRNA degradation. Catalyzes the phosphorolysis of single-stranded polyribonucleotides processively in the 3'- to 5'-direction. In Sulfurimonas denitrificans (strain ATCC 33889 / DSM 1251) (Thiomicrospira denitrificans (strain ATCC 33889 / DSM 1251)), this protein is Polyribonucleotide nucleotidyltransferase.